The following is a 155-amino-acid chain: Transcriptional repressor NrdR (155 aa).

Residues 3–34 (CPFCGNVDTQVKDSRPAEDHVSIRRRRFCPAC) fold into a zinc finger. One can recognise an ATP-cone domain in the interval 49-139 (LVVIKTNGKR…VYKNFQAADD (91 aa)).

This sequence belongs to the NrdR family. Zn(2+) is required as a cofactor.

Functionally, negatively regulates transcription of bacterial ribonucleotide reductase nrd genes and operons by binding to NrdR-boxes. The protein is Transcriptional repressor NrdR of Ruegeria sp. (strain TM1040) (Silicibacter sp.).